A 93-amino-acid chain; its full sequence is Translation initiation factor IF-1 (93 aa).

Positions 1–72 (MAKEELIQFE…EKGRLIFRHK (72 aa)) constitute an S1-like domain. Residues 70–93 (RHKDERPGGPPRSGPPRGGQFRRR) form a disordered region.

This sequence belongs to the IF-1 family. In terms of assembly, component of the 30S ribosomal translation pre-initiation complex which assembles on the 30S ribosome in the order IF-2 and IF-3, IF-1 and N-formylmethionyl-tRNA(fMet); mRNA recruitment can occur at any time during PIC assembly.

It localises to the cytoplasm. In terms of biological role, one of the essential components for the initiation of protein synthesis. Stabilizes the binding of IF-2 and IF-3 on the 30S subunit to which N-formylmethionyl-tRNA(fMet) subsequently binds. Helps modulate mRNA selection, yielding the 30S pre-initiation complex (PIC). Upon addition of the 50S ribosomal subunit IF-1, IF-2 and IF-3 are released leaving the mature 70S translation initiation complex. In Nitrobacter winogradskyi (strain ATCC 25391 / DSM 10237 / CIP 104748 / NCIMB 11846 / Nb-255), this protein is Translation initiation factor IF-1.